We begin with the raw amino-acid sequence, 98 residues long: Protein FAM24A (98 aa).

Residues 1–29 form the signal peptide; it reads MFDLRTKVMIGIASTLLIAAIMLITLVFC.

This sequence belongs to the FAM24 family.

It localises to the secreted. In Mus musculus (Mouse), this protein is Protein FAM24A (Fam24a).